A 36-amino-acid chain; its full sequence is Omega-agatoxin-Aa1b (36 aa).

It belongs to the neurotoxin 04 (omega-agtx) family. 01 (type I omega-agtx) subfamily. Expressed by the venom gland.

The protein resides in the secreted. Functionally, omega-agatoxin are antagonist of voltage-gated calcium channels. They block insect neuromuscular transmission presynaptically. This toxin is a blocker of L-type calcium channels (Cav/CACNA1). The polypeptide is Omega-agatoxin-Aa1b (Agelenopsis aperta (North American funnel-web spider)).